The sequence spans 868 residues: Programmed cell death 6-interacting protein (868 aa).

Ala-2 is modified (N-acetylalanine). The 390-residue stretch at 3-392 (TFISVQLKKT…AQMREATTLA (390 aa)) folds into the BRO1 domain. Residues 176 to 503 (TVDISPDTVG…NFRTVLDKAV (328 aa)) form an interaction with CHMP4A, CHMP4B and CHMP4C region. Residues 176–868 (TVDISPDTVG…PPQQSYYPQQ (693 aa)) are interaction with EIAV p9. An N6-acetyllysine modification is found at Lys-215. The segment at 418-868 (LTKSRSVIEQ…PPQQSYYPQQ (451 aa)) is interaction with SDCBP. Position 479 is a phosphothreonine (Thr-479). Residue Ser-481 is modified to Phosphoserine. A self-association region spans residues 503–868 (VQADGQVKEC…PPQQSYYPQQ (366 aa)). 2 disordered regions span residues 713–809 (IARE…YPGY) and 832–868 (PYPP…YPQQ). Residues 717–720 (PSAP) form an interaction with TSG101 region. Residue Ser-730 is modified to Phosphoserine. Residues 737 to 763 (PTPPTPAPRTMPPTKPQPPARPPPPVL) are compositionally biased toward pro residues. Phosphothreonine is present on residues Thr-738 and Thr-741. The residue at position 745 (Arg-745) is an Omega-N-methylarginine. Over residues 778–791 (GAGTAAPAPSQTPG) the composition is skewed to low complexity. Composition is skewed to pro residues over residues 792-807 (SAPP…PTYP) and 844-860 (APYP…PQPP). The tract at residues 801–806 (PPYPTY) is interaction with CEP55. The interval 864 to 868 (YYPQQ) is essential to promote virus budding.

As to quaternary structure, self-associates. Interacts with SH3KBP1/CIN85. Interacts with PDCD6 in a calcium -dependent manner. Interacts with TSG101 in a calcium-dependent manner; PDCD6IP homooligomerization may be required for TSG101-binding. Interacts with SGSM3. Directly interacts with CHMP4A, CHMP4B and CHMP4C. Directly interacts with CEP55 in a 1:2 stoechiometry. The interaction with CEP55 is required for PDCD6IP targeting to the midbody. May interact with PDGFRB. Interacts with SH3GL1 and SH3GL2/endophilin-1. Forms a complex with SDCBP and SDC2. Found in a complex with F-actin, TJP1/ZO-1 and PARD3. Interacts with CD2AP. Interacts with ARRDC1. Interacts (via BRO1 domain) with the ATG12-ATG3 conjugate; this interaction is bridged by ATG12 and promotes multiple PDCD6IP-mediated functions such as endolysosomal trafficking, macroautophagy and exosome biogenesis. In terms of assembly, (Microbial infection) Interacts with HIV-1 p6. Interacts with HIV-1 p9. (Microbial infection) Interacts with EIAV p9. As to quaternary structure, (Microbial infection) Interacts with Murine leukemia virus Gag polyprotein (via LYPX(n)L motif). In terms of assembly, (Microbial infection) Interacts with ebola virus protein VP40 (via YPx(n)L/I motif). May be phosphorylated on tyrosine residues by activated PDGFRB.

Its subcellular location is the cytoplasm. It localises to the cytosol. The protein localises to the melanosome. The protein resides in the cytoskeleton. It is found in the microtubule organizing center. Its subcellular location is the centrosome. It localises to the secreted. The protein localises to the extracellular exosome. The protein resides in the cell junction. It is found in the tight junction. Its subcellular location is the midbody. It localises to the midbody ring. In terms of biological role, multifunctional protein involved in endocytosis, multivesicular body biogenesis, membrane repair, cytokinesis, apoptosis and maintenance of tight junction integrity. Class E VPS protein involved in concentration and sorting of cargo proteins of the multivesicular body (MVB) for incorporation into intralumenal vesicles (ILVs) that are generated by invagination and scission from the limiting membrane of the endosome. Binds to the phospholipid lysobisphosphatidic acid (LBPA) which is abundant in MVBs internal membranes. The MVB pathway requires the sequential function of ESCRT-O, -I,-II and -III complexes. The ESCRT machinery also functions in topologically equivalent membrane fission events, such as the terminal stages of cytokinesis. Adapter for a subset of ESCRT-III proteins, such as CHMP4, to function at distinct membranes. Required for completion of cytokinesis. May play a role in the regulation of both apoptosis and cell proliferation. Regulates exosome biogenesis in concert with SDC1/4 and SDCBP. By interacting with F-actin, PARD3 and TJP1 secures the proper assembly and positioning of actomyosin-tight junction complex at the apical sides of adjacent epithelial cells that defines a spatial membrane domain essential for the maintenance of epithelial cell polarity and barrier. Its function is as follows. (Microbial infection) Involved in HIV-1 virus budding. Can replace TSG101 it its role of supporting HIV-1 release; this function requires the interaction with CHMP4B. The ESCRT machinery also functions in topologically equivalent membrane fission events, such as enveloped virus budding (HIV-1 and other lentiviruses). This is Programmed cell death 6-interacting protein from Homo sapiens (Human).